The following is a 306-amino-acid chain: Ribonuclease Z (306 aa).

Zn(2+) is bound by residues His-63, His-65, Asp-67, His-68, His-141, Asp-211, and His-269. Asp-67 acts as the Proton acceptor in catalysis.

Belongs to the RNase Z family. In terms of assembly, homodimer. The cofactor is Zn(2+).

It catalyses the reaction Endonucleolytic cleavage of RNA, removing extra 3' nucleotides from tRNA precursor, generating 3' termini of tRNAs. A 3'-hydroxy group is left at the tRNA terminus and a 5'-phosphoryl group is left at the trailer molecule.. Functionally, zinc phosphodiesterase, which displays some tRNA 3'-processing endonuclease activity. Probably involved in tRNA maturation, by removing a 3'-trailer from precursor tRNA. This chain is Ribonuclease Z, found in Staphylococcus epidermidis (strain ATCC 12228 / FDA PCI 1200).